A 509-amino-acid chain; its full sequence is Cobyric acid synthase (509 aa).

The region spanning 262–459 (EIKVGIIKLP…IHGIFENDNW (198 aa)) is the GATase cobBQ-type domain. Cysteine 343 (nucleophile) is an active-site residue. Histidine 451 is an active-site residue.

The protein belongs to the CobB/CobQ family. CobQ subfamily.

Its pathway is cofactor biosynthesis; adenosylcobalamin biosynthesis. In terms of biological role, catalyzes amidations at positions B, D, E, and G on adenosylcobyrinic A,C-diamide. NH(2) groups are provided by glutamine, and one molecule of ATP is hydrogenolyzed for each amidation. The sequence is that of Cobyric acid synthase from Prochlorococcus marinus (strain AS9601).